A 472-amino-acid polypeptide reads, in one-letter code: POU domain, class 5, transcription factor 1 (472 aa).

Disordered stretches follow at residues M127–T154 and I187–E255. Residues T220–R234 are compositionally biased toward polar residues. Positions S235 to N245 are enriched in low complexity. Positions S246 to E255 are enriched in acidic residues. Residues E249–E323 enclose the POU-specific domain. A DNA-binding region (homeobox) is located at residues K343–A402.

The protein belongs to the POU transcription factor family. Class-7 subfamily.

The protein resides in the nucleus. Its function is as follows. Involved in early development of embryos, especially in the process of gastrulation. May play an important role in establishing and specifying rhombomeric segments. Seems to be required to maintain the cells in a highly undifferentiated state. In contrast to POU2, T-POU2 lacks DNA-binding activity because of its incomplete pou domain structure. Overexpression of POU2 does not have any effect on development, whereas overexpression of t-POU2 causes developmental retardation or arrest before gastrulation. This Danio rerio (Zebrafish) protein is POU domain, class 5, transcription factor 1 (pou5f1).